Consider the following 84-residue polypeptide: Sec-independent protein translocase protein TatA (84 aa).

The helical transmembrane segment at 1-21 threads the bilayer; the sequence is MPNLGVPELLIIALVIFLLFG. The span at 42–57 shows a compositional bias: basic and acidic residues; the sequence is EMDEMKTDGDKKELAE. Residues 42 to 84 are disordered; it reads EMDEMKTDGDKKELAEKQAPTAEQQQAQDLAQPKSEQPNEHNA. Residues 62 to 77 show a composition bias toward polar residues; the sequence is TAEQQQAQDLAQPKSE.

The protein belongs to the TatA/E family. As to quaternary structure, the Tat system comprises two distinct complexes: a TatABC complex, containing multiple copies of TatA, TatB and TatC subunits, and a separate TatA complex, containing only TatA subunits. Substrates initially bind to the TatABC complex, which probably triggers association of the separate TatA complex to form the active translocon.

It localises to the cell membrane. Part of the twin-arginine translocation (Tat) system that transports large folded proteins containing a characteristic twin-arginine motif in their signal peptide across membranes. TatA could form the protein-conducting channel of the Tat system. The protein is Sec-independent protein translocase protein TatA of Corynebacterium jeikeium (strain K411).